The primary structure comprises 480 residues: Cysteine--tRNA ligase (480 aa).

Zn(2+) is bound at residue Cys-29. A 'HIGH' region motif is present at residues 31-41; it reads PTVYGHAHLGH. Cys-221, His-246, and Glu-250 together coordinate Zn(2+). Positions 278 to 282 match the 'KMSKS' region motif; sequence KMGKS. ATP is bound at residue Lys-281.

The protein belongs to the class-I aminoacyl-tRNA synthetase family. Monomer. Zn(2+) serves as cofactor.

It localises to the cytoplasm. The catalysed reaction is tRNA(Cys) + L-cysteine + ATP = L-cysteinyl-tRNA(Cys) + AMP + diphosphate. In Chlorobium chlorochromatii (strain CaD3), this protein is Cysteine--tRNA ligase.